We begin with the raw amino-acid sequence, 467 residues long: UDP-N-acetylmuramate--L-alanine ligase (467 aa).

112–118 (GTHGKTT) is an ATP binding site.

This sequence belongs to the MurCDEF family.

It is found in the cytoplasm. The enzyme catalyses UDP-N-acetyl-alpha-D-muramate + L-alanine + ATP = UDP-N-acetyl-alpha-D-muramoyl-L-alanine + ADP + phosphate + H(+). It participates in cell wall biogenesis; peptidoglycan biosynthesis. Functionally, cell wall formation. This is UDP-N-acetylmuramate--L-alanine ligase from Paraburkholderia xenovorans (strain LB400).